Reading from the N-terminus, the 205-residue chain is Large ribosomal subunit protein bL25A (205 aa).

It belongs to the bacterial ribosomal protein bL25 family. CTC subfamily. As to quaternary structure, part of the 50S ribosomal subunit; part of the 5S rRNA/L5/L18/L25 subcomplex. Contacts the 5S rRNA. Binds to the 5S rRNA independently of L5 and L18.

In terms of biological role, this is one of the proteins that binds to the 5S RNA in the ribosome where it forms part of the central protuberance. The protein is Large ribosomal subunit protein bL25A of Symbiobacterium thermophilum (strain DSM 24528 / JCM 14929 / IAM 14863 / T).